Reading from the N-terminus, the 458-residue chain is ATP synthase subunit beta (458 aa).

148-155 lines the ATP pocket; sequence GGAGVGKT.

The protein belongs to the ATPase alpha/beta chains family. F-type ATPases have 2 components, CF(1) - the catalytic core - and CF(0) - the membrane proton channel. CF(1) has five subunits: alpha(3), beta(3), gamma(1), delta(1), epsilon(1). CF(0) has three main subunits: a(1), b(2) and c(9-12). The alpha and beta chains form an alternating ring which encloses part of the gamma chain. CF(1) is attached to CF(0) by a central stalk formed by the gamma and epsilon chains, while a peripheral stalk is formed by the delta and b chains.

It is found in the cell inner membrane. It carries out the reaction ATP + H2O + 4 H(+)(in) = ADP + phosphate + 5 H(+)(out). Its function is as follows. Produces ATP from ADP in the presence of a proton gradient across the membrane. The catalytic sites are hosted primarily by the beta subunits. The protein is ATP synthase subunit beta of Francisella tularensis subsp. mediasiatica (strain FSC147).